The sequence spans 177 residues: Endoribonuclease YbeY (177 aa).

Zn(2+) is bound by residues His142, His146, and His152.

This sequence belongs to the endoribonuclease YbeY family. It depends on Zn(2+) as a cofactor.

The protein localises to the cytoplasm. Its function is as follows. Single strand-specific metallo-endoribonuclease involved in late-stage 70S ribosome quality control and in maturation of the 3' terminus of the 16S rRNA. This chain is Endoribonuclease YbeY, found in Synechococcus sp. (strain CC9311).